A 224-amino-acid chain; its full sequence is MAILKNDWAPLLEEEFHKPYYIKLREFLKEEYRTRTIYPDMYDIFNALHYTPYAQVKVVILGQDPYHGPGQAHGLSFSVKPGVPIPPSLANIFKELHDDLGCYIPNNGYLVKWAKQGVLLLNTVLTVRRGEANSHKGKGWEFFTDRVIELVNEKEDPVVFLLWGRHAQAKKELITNPRHHIIEAPHPSPFSAARGFFGHRPFSRTNAFLQKVGREPIDWQIENI.

Aspartate 64 functions as the Proton acceptor in the catalytic mechanism.

The protein belongs to the uracil-DNA glycosylase (UDG) superfamily. UNG family.

It is found in the cytoplasm. It carries out the reaction Hydrolyzes single-stranded DNA or mismatched double-stranded DNA and polynucleotides, releasing free uracil.. Excises uracil residues from the DNA which can arise as a result of misincorporation of dUMP residues by DNA polymerase or due to deamination of cytosine. The protein is Uracil-DNA glycosylase of Geobacillus sp. (strain WCH70).